The following is a 264-amino-acid chain: tRNA pseudouridine synthase A (264 aa).

Asp-51 (nucleophile) is an active-site residue. Residue Tyr-109 coordinates substrate.

It belongs to the tRNA pseudouridine synthase TruA family. As to quaternary structure, homodimer.

The catalysed reaction is uridine(38/39/40) in tRNA = pseudouridine(38/39/40) in tRNA. In terms of biological role, formation of pseudouridine at positions 38, 39 and 40 in the anticodon stem and loop of transfer RNAs. The chain is tRNA pseudouridine synthase A from Vibrio cholerae serotype O1 (strain ATCC 39541 / Classical Ogawa 395 / O395).